The chain runs to 177 residues: MSRVAKAPVVVPAGVDVKINGQVITIKGKNGELTRTLNDAVEVKHADNALTFGPRDGYADGWAQAGTARALLNSMVIGVTEGFTKKLQLVGVGYRAAVKGNVVNLSLGFSHPVDHQLPAGITAECPTQAEIVLKGADKQVIGQVAADLRAYRRPEPYKGKGVRYADEVVRTKEAKKK.

It belongs to the universal ribosomal protein uL6 family. In terms of assembly, part of the 50S ribosomal subunit.

This protein binds to the 23S rRNA, and is important in its secondary structure. It is located near the subunit interface in the base of the L7/L12 stalk, and near the tRNA binding site of the peptidyltransferase center. The protein is Large ribosomal subunit protein uL6 of Salmonella dublin (strain CT_02021853).